We begin with the raw amino-acid sequence, 160 residues long: General odorant-binding protein 2 (160 aa).

An N-terminal signal peptide occupies residues 1 to 19; the sequence is MGYKLLLMYIAIVIDSVIG. 3 cysteine pairs are disulfide-bonded: cysteine 38-cysteine 73, cysteine 69-cysteine 127, and cysteine 116-cysteine 136.

The protein belongs to the PBP/GOBP family. Antenna.

Its function is as follows. Present in the aqueous fluid surrounding olfactory sensory dendrites and are thought to aid in the capture and transport of hydrophobic odorants into and through this fluid. The sequence is that of General odorant-binding protein 2 from Antheraea pernyi (Chinese oak silk moth).